Here is a 338-residue protein sequence, read N- to C-terminus: Secretory carrier-associated membrane protein 1 (338 aa).

The tract at residues 1–63 (MSDFDSNPFA…PNVPSTQPAI (63 aa)) is disordered. Residue Ser2 is modified to N-acetylserine. Ser2 carries the phosphoserine modification. Residues 2 to 155 (SDFDSNPFAD…QKTVKIMYYL (154 aa)) are Cytoplasmic-facing. Phosphothreonine is present on Thr45. Residues 156–176 (WMFHAVTLFLNIFGCLAWFCV) traverse the membrane as a helical segment. Over 177-181 (DPSRG) the chain is Lumenal. Residues 182 to 202 (VDFGLSILWFLLFTPCSFVCW) form a helical membrane-spanning segment. Residues 203 to 217 (YRPLYGAFRSDSSFR) are Cytoplasmic-facing. The helical transmembrane segment at 218-238 (FFVFFFVYICQFAVHVLQAAG) threads the bilayer. Residues 239 to 261 (FHNWGNCGWISSLTGLNQSIPVG) lie on the Lumenal side of the membrane. A helical transmembrane segment spans residues 262 to 282 (IMMIIIAALFTASAVISLVMF). Topologically, residues 283–338 (KKVHGLYRTTGASFEKAQQEFATGVMSNKTVQTAAANAASTAATSAAQNAFKGNQI) are cytoplasmic.

The protein belongs to the SCAMP family. As to quaternary structure, interacts with SYNRG, ITSN1 and SLC9A7.

The protein localises to the golgi apparatus. Its subcellular location is the trans-Golgi network membrane. It is found in the recycling endosome membrane. In terms of biological role, functions in post-Golgi recycling pathways. Acts as a recycling carrier to the cell surface. The chain is Secretory carrier-associated membrane protein 1 (SCAMP1) from Sus scrofa (Pig).